The following is a 157-amino-acid chain: Cyclic pyranopterin monophosphate synthase (157 aa).

Substrate-binding positions include 74-76 (MCH) and 112-113 (ME). D127 is a catalytic residue.

It belongs to the MoaC family. Homohexamer; trimer of dimers.

It catalyses the reaction (8S)-3',8-cyclo-7,8-dihydroguanosine 5'-triphosphate = cyclic pyranopterin phosphate + diphosphate. Its pathway is cofactor biosynthesis; molybdopterin biosynthesis. Functionally, catalyzes the conversion of (8S)-3',8-cyclo-7,8-dihydroguanosine 5'-triphosphate to cyclic pyranopterin monophosphate (cPMP). The chain is Cyclic pyranopterin monophosphate synthase from Campylobacter jejuni (strain RM1221).